We begin with the raw amino-acid sequence, 328 residues long: Sialic acid-binding Ig-like lectin 15 (328 aa).

An N-terminal signal peptide occupies residues 1 to 19 (MEKSIWLLACLAWVLPTGS). Topologically, residues 20–263 (FVRTKIDTTE…RFHGASGAST (244 aa)) are extracellular. Residues 40-158 (PAQRWSMQVP…DVHDRYESRH (119 aa)) enclose the Ig-like V-type domain. Disulfide bonds link Cys64–Cys142 and Cys95–Cys104. Arg143 serves as a coordination point for N-acetylneuraminate. Residues 168-251 (PRIVNISVLP…SLGRSEASVY (84 aa)) form the Ig-like C2-type domain. Asn172 is a glycosylation site (N-linked (GlcNAc...) asparagine). The cysteines at positions 187 and 237 are disulfide-linked. A helical membrane pass occupies residues 264–284 (VALLLGALGFKALLLLGVLAA). Over 285-328 (RAARRRPEHLDTPDTPPRSQAQESNYENLSQMNPRSPPATMCSP) the chain is Cytoplasmic. The disordered stretch occupies residues 289-328 (RRPEHLDTPDTPPRSQAQESNYENLSQMNPRSPPATMCSP). Positions 301–318 (PRSQAQESNYENLSQMNP) are enriched in polar residues.

The protein belongs to the immunoglobulin superfamily. SIGLEC (sialic acid binding Ig-like lectin) family. Interacts with TYROBP and HCST. In terms of tissue distribution, expressed in macrophage and/or dendritic cells of spleen and lymph nodes.

The protein localises to the membrane. Its function is as follows. Binds sialylated glycoproteins. The chain is Sialic acid-binding Ig-like lectin 15 (SIGLEC15) from Homo sapiens (Human).